The primary structure comprises 197 residues: Imidazoleglycerol-phosphate dehydratase (197 aa).

It belongs to the imidazoleglycerol-phosphate dehydratase family.

Its subcellular location is the cytoplasm. It catalyses the reaction D-erythro-1-(imidazol-4-yl)glycerol 3-phosphate = 3-(imidazol-4-yl)-2-oxopropyl phosphate + H2O. It functions in the pathway amino-acid biosynthesis; L-histidine biosynthesis; L-histidine from 5-phospho-alpha-D-ribose 1-diphosphate: step 6/9. This Cellvibrio japonicus (strain Ueda107) (Pseudomonas fluorescens subsp. cellulosa) protein is Imidazoleglycerol-phosphate dehydratase.